Reading from the N-terminus, the 251-residue chain is Transmembrane ascorbate-dependent reductase CYB561 (251 aa).

The residue at position 1 (M1) is an N-acetylmethionine. At 1–16 (MEGGAAASTPAALPYY) the chain is on the cytoplasmic side. Residues 17-37 (VAFSQLLGLTLVAMTGAWLGL) form a helical membrane-spanning segment. A Cytochrome b561 domain is found at 19–220 (FSQLLGLTLV…FGGAVLYILT (202 aa)). Residues 38–51 (YRGGIAWESDLQFN) lie on the Vesicular side of the membrane. A helical membrane pass occupies residues 52-72 (AHPLCMVIGLIFLQGDALLVY). Residues H53, R73, and K80 each contribute to the heme b site. The Cytoplasmic segment spans residues 73-85 (RVFRNEAKRTTKV). 2 residues coordinate L-ascorbate: K80 and K84. The helical transmembrane segment at 86-106 (LHGLLHIFALVIALVGLVAVF) threads the bilayer. Residues H87, 116–119 (DLYS), and H121 each bind heme b. Residues 107–124 (DYHRKEGYADLYSLHSWC) lie on the Vesicular side of the membrane. The chain crosses the membrane as a helical span at residues 125–145 (GILVFVLYFVQWLVGFSFFLF). Residues 146 to 158 (PGASFSLRSRYRP) are Cytoplasmic-facing. R153 provides a ligand contact to L-ascorbate. Residues 159-179 (QHIFFGATIFLLSVGTALLGL) traverse the membrane as a helical segment. Heme b-binding residues include H160 and E181. Over 180–198 (KEALLFKLRDKYSAFEPEG) the chain is Vesicular. Residues 199–219 (VLANVLGLLLACFGGAVLYIL) form a helical membrane-spanning segment. The Cytoplasmic portion of the chain corresponds to 220–251 (TRADWKRPSQAEEQALSMDFKTLTEGDSPGSQ). K225 is a binding site for heme b. At S247 the chain carries Phosphoserine.

The cofactor is heme b.

The protein localises to the cytoplasmic vesicle. Its subcellular location is the secretory vesicle. It is found in the chromaffin granule membrane. The enzyme catalyses monodehydro-L-ascorbate radical(out) + L-ascorbate(in) = monodehydro-L-ascorbate radical(in) + L-ascorbate(out). Transmembrane reductase that uses ascorbate as an electron donor in the cytoplasm and transfers electrons across membranes to reduce monodehydro-L-ascorbate radical in the lumen of secretory vesicles. It is therefore involved the regeneration and homeostasis within secretory vesicles of ascorbate which in turn provides reducing equivalents needed to support the activity of intravesicular enzymes. The protein is Transmembrane ascorbate-dependent reductase CYB561 (CYB561) of Pongo abelii (Sumatran orangutan).